A 469-amino-acid polypeptide reads, in one-letter code: MSFLSVSRLAPKLLNSKNATYFLVAARNASASTTNLKDVLSDLIPKEQSRIKNFKQQYGKTNIGQITVDMVYGGMRGMKGLVYETSVLDPEEGIRFRGYSIPECQKLLPKAPGGEEPLPEGLFWLLVTGQVPTEEQVKWVSKEWAKRAALPSHVVTMLDNFPTNLHPMSQFSAAITALNSESSFARAYSEGVHKTKYWEFVYEDSMDLIAKLPCIAAKIYRNLYREGSSIGAIDSNLDWSHNFTNMLGYSEAQFTELMRLYLTIHSDHEGGNVSAHTSHLVGSALSDPYLSFSAAMNGLAGPLHGLANQEVLVWLTALQKEMGGEVSDERMRDYIWNTLKSGRVVPGYGHAVLRKTDPRYTCQREFALKHLPNDPMFKLVAQLYKIVPNVLLEQGKAKNPWPNVDAHSGVLLQYYGMTEMNYYTVLFGVSRALGVLAQLVWSRALGFPLERPKSMSTDGLMTLVGAKSG.

The N-terminal 30 residues, 1-30 (MSFLSVSRLAPKLLNSKNATYFLVAARNAS), are a transit peptide targeting the mitochondrion. Residues histidine 304 and histidine 350 contribute to the active site. Arginine 359 is a binding site for oxaloacetate. Residue aspartate 405 is part of the active site. Oxaloacetate-binding residues include arginine 431 and arginine 451.

This sequence belongs to the citrate synthase family. Homodimer.

The protein resides in the mitochondrion matrix. The catalysed reaction is oxaloacetate + acetyl-CoA + H2O = citrate + CoA + H(+). The protein operates within carbohydrate metabolism; tricarboxylic acid cycle; isocitrate from oxaloacetate: step 1/2. Key enzyme of the Krebs tricarboxylic acid cycle which catalyzes the synthesis of citrate from acetyl coenzyme A and oxaloacetate. The protein is Citrate synthase, mitochondrial (cs) of Katsuwonus pelamis (Skipjack tuna).